Here is a 451-residue protein sequence, read N- to C-terminus: Phosphoglucosamine mutase (451 aa).

The active-site Phosphoserine intermediate is the Ser103. Residues Ser103, Asp243, Asp245, and Asp247 each coordinate Mg(2+). Ser103 carries the phosphoserine modification.

It belongs to the phosphohexose mutase family. It depends on Mg(2+) as a cofactor. In terms of processing, activated by phosphorylation.

The catalysed reaction is alpha-D-glucosamine 1-phosphate = D-glucosamine 6-phosphate. Its function is as follows. Catalyzes the conversion of glucosamine-6-phosphate to glucosamine-1-phosphate. The chain is Phosphoglucosamine mutase from Limosilactobacillus reuteri subsp. reuteri (strain JCM 1112) (Lactobacillus reuteri).